A 430-amino-acid chain; its full sequence is Long-chain specific acyl-CoA dehydrogenase, mitochondrial (430 aa).

The transit peptide at 1–30 (MAARLLLRSLRVLSARSATLPPPSARCSHS) directs the protein to the mitochondrion. Residue lysine 42 is modified to N6-acetyllysine. Residues serine 54 and serine 55 each carry the phosphoserine modification. An N6-acetyllysine; alternate mark is found at lysine 66 and lysine 81. N6-succinyllysine; alternate occurs at positions 66 and 81. Residues lysine 92 and lysine 95 each carry the N6-acetyllysine modification. The residue at position 165 (lysine 165) is an N6-succinyllysine. 170–179 (IAMTEPGAGS) contributes to the FAD binding site. Serine 179 contacts substrate. At serine 191 the chain carries Phosphoserine. 203 to 205 (FIT) contributes to the FAD binding site. 227–228 (AH) lines the substrate pocket. Residue lysine 240 is modified to N6-succinyllysine. An N6-acetyllysine; alternate mark is found at lysine 254 and lysine 279. An N6-succinyllysine; alternate mark is found at lysine 254 and lysine 279. Residues tyrosine 282 and 289 to 292 (PQER) each bind substrate. Glutamate 291 functions as the Proton acceptor in the catalytic mechanism. Arginine 317 is an FAD binding site. Lysine 318 carries the post-translational modification N6-acetyllysine. At lysine 322 the chain carries N6-acetyllysine; alternate. Position 322 is an N6-succinyllysine; alternate (lysine 322). Glutamine 328 serves as a coordination point for FAD. The residue at position 358 (lysine 358) is an N6-acetyllysine. A Phosphoserine modification is found at serine 362. Residue 385-389 (QLHGG) coordinates FAD. Residue 412–413 (GG) coordinates substrate. 414–416 (TNE) contributes to the FAD binding site.

The protein belongs to the acyl-CoA dehydrogenase family. Homotetramer. The cofactor is FAD. In terms of processing, acetylation at Lys-318 and Lys-322 in proximity of the cofactor-binding sites strongly reduces catalytic activity. These sites are deacetylated by SIRT3.

The protein localises to the mitochondrion matrix. It catalyses the reaction a long-chain 2,3-saturated fatty acyl-CoA + oxidized [electron-transfer flavoprotein] + H(+) = a long-chain (2E)-enoyl-CoA + reduced [electron-transfer flavoprotein]. It carries out the reaction octanoyl-CoA + oxidized [electron-transfer flavoprotein] + H(+) = (2E)-octenoyl-CoA + reduced [electron-transfer flavoprotein]. The enzyme catalyses decanoyl-CoA + oxidized [electron-transfer flavoprotein] + H(+) = (2E)-decenoyl-CoA + reduced [electron-transfer flavoprotein]. The catalysed reaction is dodecanoyl-CoA + oxidized [electron-transfer flavoprotein] + H(+) = (2E)-dodecenoyl-CoA + reduced [electron-transfer flavoprotein]. It catalyses the reaction tetradecanoyl-CoA + oxidized [electron-transfer flavoprotein] + H(+) = (2E)-tetradecenoyl-CoA + reduced [electron-transfer flavoprotein]. It carries out the reaction oxidized [electron-transfer flavoprotein] + hexadecanoyl-CoA + H(+) = (2E)-hexadecenoyl-CoA + reduced [electron-transfer flavoprotein]. The enzyme catalyses octadecanoyl-CoA + oxidized [electron-transfer flavoprotein] + H(+) = (2E)-octadecenoyl-CoA + reduced [electron-transfer flavoprotein]. The catalysed reaction is (5E)-tetradecenoyl-CoA + oxidized [electron-transfer flavoprotein] + H(+) = (2E,5E)-tetradecadienoyl-CoA + reduced [electron-transfer flavoprotein]. It catalyses the reaction (5Z)-tetradecenoyl-CoA + oxidized [electron-transfer flavoprotein] + H(+) = (2E,5Z)-tetradecadienoyl-CoA + reduced [electron-transfer flavoprotein]. It carries out the reaction oxidized [electron-transfer flavoprotein] + (9Z)-octadecenoyl-CoA + H(+) = (2E,9Z)-octadecadienoyl-CoA + reduced [electron-transfer flavoprotein]. The enzyme catalyses hexanoyl-CoA + oxidized [electron-transfer flavoprotein] + H(+) = (2E)-hexenoyl-CoA + reduced [electron-transfer flavoprotein]. The catalysed reaction is eicosanoyl-CoA + oxidized [electron-transfer flavoprotein] + H(+) = (2E)-eicosenoyl-CoA + reduced [electron-transfer flavoprotein]. It catalyses the reaction docosanoyl-CoA + oxidized [electron-transfer flavoprotein] + H(+) = (2E)-docosenoyl-CoA + reduced [electron-transfer flavoprotein]. It carries out the reaction tetracosanoyl-CoA + oxidized [electron-transfer flavoprotein] + H(+) = (2E)-tetracosenoyl-CoA + reduced [electron-transfer flavoprotein]. Its pathway is lipid metabolism; mitochondrial fatty acid beta-oxidation. Inhibited by crotonyl-CoA, 2-octenoyl-CoA and 2-hexadecenoyl-CoA. In terms of biological role, long-chain specific acyl-CoA dehydrogenase is one of the acyl-CoA dehydrogenases that catalyze the first step of mitochondrial fatty acid beta-oxidation, an aerobic process breaking down fatty acids into acetyl-CoA and allowing the production of energy from fats. The first step of fatty acid beta-oxidation consists in the removal of one hydrogen from C-2 and C-3 of the straight-chain fatty acyl-CoA thioester, resulting in the formation of trans-2-enoyl-CoA. Among the different mitochondrial acyl-CoA dehydrogenases, long-chain specific acyl-CoA dehydrogenase can act on saturated and unsaturated acyl-CoAs with 6 to 24 carbons with a preference for 8 to 18 carbons long primary chains. This chain is Long-chain specific acyl-CoA dehydrogenase, mitochondrial, found in Rattus norvegicus (Rat).